Reading from the N-terminus, the 197-residue chain is dCTP deaminase (197 aa).

Residues 110-115, Asp-128, 136-138, Tyr-171, and Gln-182 contribute to the dCTP site; these read RSSLAR and VLE. The active-site Proton donor/acceptor is the Glu-138.

This sequence belongs to the dCTP deaminase family. Homotrimer.

It carries out the reaction dCTP + H2O + H(+) = dUTP + NH4(+). The protein operates within pyrimidine metabolism; dUMP biosynthesis; dUMP from dCTP (dUTP route): step 1/2. Its function is as follows. Catalyzes the deamination of dCTP to dUTP. This chain is dCTP deaminase, found in Alteromonas mediterranea (strain DSM 17117 / CIP 110805 / LMG 28347 / Deep ecotype).